A 474-amino-acid chain; its full sequence is 6-phospho-beta-galactosidase (474 aa).

D-galactose 6-phosphate contacts are provided by Q19, H116, N159, E160, and N297. E160 acts as the Proton donor in catalysis. E375 acts as the Nucleophile in catalysis. D-galactose 6-phosphate-binding residues include S433, W434, K440, and Y442.

Belongs to the glycosyl hydrolase 1 family.

It carries out the reaction a 6-phospho-beta-D-galactoside + H2O = D-galactose 6-phosphate + an alcohol. Its pathway is carbohydrate metabolism; lactose degradation; D-galactose 6-phosphate and beta-D-glucose from lactose 6-phosphate: step 1/1. The protein is 6-phospho-beta-galactosidase of Lacticaseibacillus rhamnosus (Lactobacillus rhamnosus).